The sequence spans 657 residues: UvrABC system protein B (657 aa).

The Helicase ATP-binding domain occupies 24–409 (AGVRNQVKSQ…SGHIVQQIIR (386 aa)). 37 to 44 (GTTGSGKT) provides a ligand contact to ATP. Residues 90–113 (YYDYYQPEAYIARSDTYIEKSLLI) carry the Beta-hairpin motif. The region spanning 426-589 (QVDDLLEEIR…IVPKPIIKAI (164 aa)) is the Helicase C-terminal domain. Residues 617–652 (EEQIKKYEALMQRAAKEFRFNEAAKYRDAMQACKEQ) enclose the UVR domain.

This sequence belongs to the UvrB family. Forms a heterotetramer with UvrA during the search for lesions. Interacts with UvrC in an incision complex.

The protein resides in the cytoplasm. Functionally, the UvrABC repair system catalyzes the recognition and processing of DNA lesions. A damage recognition complex composed of 2 UvrA and 2 UvrB subunits scans DNA for abnormalities. Upon binding of the UvrA(2)B(2) complex to a putative damaged site, the DNA wraps around one UvrB monomer. DNA wrap is dependent on ATP binding by UvrB and probably causes local melting of the DNA helix, facilitating insertion of UvrB beta-hairpin between the DNA strands. Then UvrB probes one DNA strand for the presence of a lesion. If a lesion is found the UvrA subunits dissociate and the UvrB-DNA preincision complex is formed. This complex is subsequently bound by UvrC and the second UvrB is released. If no lesion is found, the DNA wraps around the other UvrB subunit that will check the other stand for damage. In Chlamydia pneumoniae (Chlamydophila pneumoniae), this protein is UvrABC system protein B.